A 133-amino-acid chain; its full sequence is Antifungal protein ginkbilobin-like protein 2 (133 aa).

The signal sequence occupies residues 1–24 (MSMGSFGFALAVMVLAVLVASAAG). One can recognise a Gnk2-homologous domain in the interval 28–133 (TNLVSSACNG…CFIRYEQYSI (106 aa)). Asn-36 contributes to the alpha-D-mannopyranose binding site. Intrachain disulfides connect Cys-87/Cys-96 and Cys-99/Cys-124. Alpha-D-mannopyranose is bound by residues Arg-118 and Glu-129.

Exerts antifungal activity through its carbohydrate-binding specificity. This chain is Antifungal protein ginkbilobin-like protein 2, found in Picea glauca (White spruce).